Here is a 38-residue protein sequence, read N- to C-terminus: Large ribosomal subunit protein bL36 (38 aa).

Belongs to the bacterial ribosomal protein bL36 family.

The protein is Large ribosomal subunit protein bL36 of Chlorobium phaeobacteroides (strain BS1).